A 39-amino-acid polypeptide reads, in one-letter code: MAGGGRIPLWIVATVAGTGVLVVVGLFFYGAYAGLGSSL.

The chain crosses the membrane as a helical span at residues 7–27 (IPLWIVATVAGTGVLVVVGLF).

Belongs to the PsbJ family. In terms of assembly, PSII is composed of 1 copy each of membrane proteins PsbA, PsbB, PsbC, PsbD, PsbE, PsbF, PsbH, PsbI, PsbJ, PsbK, PsbL, PsbM, PsbT, PsbX, PsbY, PsbZ, Psb30/Ycf12, peripheral proteins PsbO, CyanoQ (PsbQ), PsbU, PsbV and a large number of cofactors. It forms dimeric complexes.

It is found in the cellular thylakoid membrane. Functionally, one of the components of the core complex of photosystem II (PSII). PSII is a light-driven water:plastoquinone oxidoreductase that uses light energy to abstract electrons from H(2)O, generating O(2) and a proton gradient subsequently used for ATP formation. It consists of a core antenna complex that captures photons, and an electron transfer chain that converts photonic excitation into a charge separation. This chain is Photosystem II reaction center protein J, found in Synechococcus elongatus (strain ATCC 33912 / PCC 7942 / FACHB-805) (Anacystis nidulans R2).